A 190-amino-acid chain; its full sequence is Threonylcarbamoyl-AMP synthase (190 aa).

The YrdC-like domain occupies 7–190 (SEAVAHAVAV…ALTGELFRQG (184 aa)).

This sequence belongs to the SUA5 family. TsaC subfamily.

Its subcellular location is the cytoplasm. It catalyses the reaction L-threonine + hydrogencarbonate + ATP = L-threonylcarbamoyladenylate + diphosphate + H2O. Its function is as follows. Required for the formation of a threonylcarbamoyl group on adenosine at position 37 (t(6)A37) in tRNAs that read codons beginning with adenine. Catalyzes the conversion of L-threonine, HCO(3)(-)/CO(2) and ATP to give threonylcarbamoyl-AMP (TC-AMP) as the acyladenylate intermediate, with the release of diphosphate. The polypeptide is Threonylcarbamoyl-AMP synthase (Klebsiella pneumoniae subsp. pneumoniae (strain ATCC 700721 / MGH 78578)).